We begin with the raw amino-acid sequence, 1408 residues long: DNA-directed RNA polymerase subunit beta (1408 aa).

The tract at residues 1383–1408 is disordered; sequence PERQRSFGGDFLGGGDGEERKTGTEA. Over residues 1399–1408 the composition is skewed to basic and acidic residues; it reads GEERKTGTEA.

This sequence belongs to the RNA polymerase beta chain family. As to quaternary structure, the RNAP catalytic core consists of 2 alpha, 1 beta, 1 beta' and 1 omega subunit. When a sigma factor is associated with the core the holoenzyme is formed, which can initiate transcription.

It catalyses the reaction RNA(n) + a ribonucleoside 5'-triphosphate = RNA(n+1) + diphosphate. DNA-dependent RNA polymerase catalyzes the transcription of DNA into RNA using the four ribonucleoside triphosphates as substrates. The chain is DNA-directed RNA polymerase subunit beta from Myxococcus xanthus (strain DK1622).